A 217-amino-acid chain; its full sequence is UPF0502 protein PFLU_2135 (217 aa).

The protein belongs to the UPF0502 family.

The sequence is that of UPF0502 protein PFLU_2135 from Pseudomonas fluorescens (strain SBW25).